A 107-amino-acid polypeptide reads, in one-letter code: Quaternary ammonium compound-resistance protein QacC (107 aa).

Topologically, residues 1-2 are cytoplasmic; sequence MP. A helical transmembrane segment spans residues 3–20; it reads YIYLIIAISTEVIGSAFL. Residues 21–29 lie on the Extracellular side of the membrane; it reads KSSEGFSKF. Residues 30–47 traverse the membrane as a helical segment; it reads IPSLGTIISFGICFYFLS. The Cytoplasmic segment spans residues 48-56; sequence KTMQHLPLN. Residues 57–75 traverse the membrane as a helical segment; the sequence is ITYATWAGLGLVLTTVVSI. Residues 76–85 are Extracellular-facing; that stretch reads IIFKEQINLI. Residues 86–103 traverse the membrane as a helical segment; the sequence is TIVSIVLIIVGVVSLNIF. Over 104 to 107 the chain is Cytoplasmic; that stretch reads GTSH.

Belongs to the drug/metabolite transporter (DMT) superfamily. Small multidrug resistance (SMR) (TC 2.A.7.1) family.

The protein resides in the cell membrane. Ethidium export is inhibited by N-ethylmaleimide (NEM). Its function is as follows. Multidrug exporter. Is implicated for the resistance to bacteriocidal quaternary ammonium compounds and ethidium bromide. The sequence is that of Quaternary ammonium compound-resistance protein QacC from Staphylococcus aureus.